Here is a 176-residue protein sequence, read N- to C-terminus: Thiol-disulfide oxidoreductase ResA (176 aa).

The chain crosses the membrane as a helical; Signal-anchor for type II membrane protein span at residues 11–30 (LSILAVISVALGYTFYSNFF). The region spanning 36–176 (ARAGEQAVNF…EFMELIKPEA (141 aa)) is the Thioredoxin domain. Cys74 and Cys77 are disulfide-bonded.

Belongs to the thioredoxin family. ResA subfamily.

The protein localises to the cell membrane. It functions in the pathway protein modification; cytochrome c assembly. Its function is as follows. Thiol-disulfide oxidoreductase which is required in disulfide reduction during c-type cytochrome synthesis. May accept reducing equivalents from CcdA, leading to breakage of disulfide bonds in apocytochrome c; following this reduction heme can be covalently attached. The protein is Thiol-disulfide oxidoreductase ResA of Halalkalibacterium halodurans (strain ATCC BAA-125 / DSM 18197 / FERM 7344 / JCM 9153 / C-125) (Bacillus halodurans).